The primary structure comprises 243 residues: Cell division protein ZipA (243 aa).

Residues 1–4 (MSDM) are Periplasmic-facing. The chain crosses the membrane as a helical span at residues 5–25 (AMIRIGILIAGLLLVAAIFLF). Residues 26–243 (GRPKKSPQGR…APPLTKSPRW (218 aa)) are Cytoplasmic-facing. Residues 30–89 (KSPQGRRVDKDEGQPRERREPVISSEFGVEDDAAERAEGVEQSELNLEGQDASGGNEVGK) are disordered. The span at 35–50 (RRVDKDEGQPRERREP) shows a compositional bias: basic and acidic residues.

The protein belongs to the ZipA family. In terms of assembly, interacts with FtsZ via their C-terminal domains.

Its subcellular location is the cell inner membrane. Functionally, essential cell division protein that stabilizes the FtsZ protofilaments by cross-linking them and that serves as a cytoplasmic membrane anchor for the Z ring. Also required for the recruitment to the septal ring of downstream cell division proteins. In Xanthomonas euvesicatoria pv. vesicatoria (strain 85-10) (Xanthomonas campestris pv. vesicatoria), this protein is Cell division protein ZipA.